The primary structure comprises 778 residues: Endonuclease MutS2 (778 aa).

328-335 (GPNTGGKT) contributes to the ATP binding site. The 76-residue stretch at 702–777 (LDLRGKRYEE…GSGATIVTFK (76 aa)) folds into the Smr domain.

The protein belongs to the DNA mismatch repair MutS family. MutS2 subfamily. Homodimer. Binds to stalled ribosomes, contacting rRNA.

Functionally, endonuclease that is involved in the suppression of homologous recombination and thus may have a key role in the control of bacterial genetic diversity. Acts as a ribosome collision sensor, splitting the ribosome into its 2 subunits. Detects stalled/collided 70S ribosomes which it binds and splits by an ATP-hydrolysis driven conformational change. Acts upstream of the ribosome quality control system (RQC), a ribosome-associated complex that mediates the extraction of incompletely synthesized nascent chains from stalled ribosomes and their subsequent degradation. Probably generates substrates for RQC. This chain is Endonuclease MutS2, found in Streptococcus pneumoniae (strain Taiwan19F-14).